A 226-amino-acid chain; its full sequence is CRISPR-associated endonuclease Cas3-HD (226 aa).

The HD Cas3-type domain maps to 9-204 (GRDCLQTYED…HVLTVCDNWG (196 aa)). Residues Asp56, His74, His101, and His102 each coordinate Mg(2+).

This sequence belongs to the CRISPR-associated nuclease Cas3-HD family. In terms of assembly, monomer. Can form a Cascade complex with Csa5, Cas7, Cas5a, Cas3 and Cas8a2. Mg(2+) is required as a cofactor.

CRISPR (clustered regularly interspaced short palindromic repeat), is an adaptive immune system that provides protection against mobile genetic elements (viruses, transposable elements and conjugative plasmids). CRISPR clusters contain sequences complementary to antecedent mobile elements and target invading nucleic acids. CRISPR clusters are transcribed and processed into CRISPR RNA (crRNA). Cas3 plus Cascade participate in CRISPR interference, the third stage of CRISPR immunity. Acts as a ssDNA and ssRNA nuclease, probably with both exo- and endonuclease activities. Activity is higher for DNA than RNA. In Thermoproteus tenax (strain ATCC 35583 / DSM 2078 / JCM 9277 / NBRC 100435 / Kra 1), this protein is CRISPR-associated endonuclease Cas3-HD (cas3').